Reading from the N-terminus, the 98-residue chain is Integration host factor subunit alpha (98 aa).

The interval 51 to 71 (NFDLRDKNERPGRNPKTGEDI) is disordered. Positions 53–69 (DLRDKNERPGRNPKTGE) are enriched in basic and acidic residues.

It belongs to the bacterial histone-like protein family. As to quaternary structure, heterodimer of an alpha and a beta chain.

In terms of biological role, this protein is one of the two subunits of integration host factor, a specific DNA-binding protein that functions in genetic recombination as well as in transcriptional and translational control. This chain is Integration host factor subunit alpha, found in Vibrio parahaemolyticus serotype O3:K6 (strain RIMD 2210633).